Reading from the N-terminus, the 359-residue chain is Methylthioribose-1-phosphate isomerase (359 aa).

Substrate contacts are provided by residues 50–52 (RGA), Arg-93, and Gln-200. The Proton donor role is filled by Asp-241. A substrate-binding site is contributed by 251–252 (NK).

The protein belongs to the eIF-2B alpha/beta/delta subunits family. MtnA subfamily.

It catalyses the reaction 5-(methylsulfanyl)-alpha-D-ribose 1-phosphate = 5-(methylsulfanyl)-D-ribulose 1-phosphate. It functions in the pathway amino-acid biosynthesis; L-methionine biosynthesis via salvage pathway; L-methionine from S-methyl-5-thio-alpha-D-ribose 1-phosphate: step 1/6. Catalyzes the interconversion of methylthioribose-1-phosphate (MTR-1-P) into methylthioribulose-1-phosphate (MTRu-1-P). This chain is Methylthioribose-1-phosphate isomerase, found in Symbiobacterium thermophilum (strain DSM 24528 / JCM 14929 / IAM 14863 / T).